The sequence spans 374 residues: Flavonoid O-methyltransferase-like protein Os11g0303600 (374 aa).

S-adenosyl-L-homocysteine contacts are provided by Asp-242, Asp-262, Met-263, and Lys-276. His-280 serves as the catalytic Proton acceptor.

It belongs to the class I-like SAM-binding methyltransferase superfamily. Cation-independent O-methyltransferase family. COMT subfamily.

This is Flavonoid O-methyltransferase-like protein Os11g0303600 from Oryza sativa subsp. japonica (Rice).